The sequence spans 941 residues: Bifunctional uridylyltransferase/uridylyl-removing enzyme (941 aa).

The tract at residues 1–372 is uridylyltransferase; that stretch reads MAKHDLSDAT…RFAHRPRRIP (372 aa). Positions 373–728 are uridylyl-removing; sequence GTPEFIEDRG…VRTHSFHAIT (356 aa). The region spanning 489–611 is the HD domain; the sequence is VDEHLIRSVG…VQSLDRLRML (123 aa). ACT domains lie at 729–810 and 840–919; these read EITV…EVIA and VIEI…LREQ. The interval 916-941 is disordered; the sequence is LREQMPSGIIAPAATKSPAAEKKARV.

It belongs to the GlnD family. The cofactor is Mg(2+).

It catalyses the reaction [protein-PII]-L-tyrosine + UTP = [protein-PII]-uridylyl-L-tyrosine + diphosphate. The catalysed reaction is [protein-PII]-uridylyl-L-tyrosine + H2O = [protein-PII]-L-tyrosine + UMP + H(+). With respect to regulation, uridylyltransferase (UTase) activity is inhibited by glutamine, while glutamine activates uridylyl-removing (UR) activity. Its function is as follows. Modifies, by uridylylation and deuridylylation, the PII regulatory proteins (GlnB and homologs), in response to the nitrogen status of the cell that GlnD senses through the glutamine level. Under low glutamine levels, catalyzes the conversion of the PII proteins and UTP to PII-UMP and PPi, while under higher glutamine levels, GlnD hydrolyzes PII-UMP to PII and UMP (deuridylylation). Thus, controls uridylylation state and activity of the PII proteins, and plays an important role in the regulation of nitrogen assimilation and metabolism. The chain is Bifunctional uridylyltransferase/uridylyl-removing enzyme from Allorhizobium ampelinum (strain ATCC BAA-846 / DSM 112012 / S4) (Agrobacterium vitis (strain S4)).